The primary structure comprises 592 residues: Aspartate--tRNA ligase (592 aa).

Glutamate 171 lines the L-aspartate pocket. The aspartate stretch occupies residues 195–198; the sequence is QLFK. Arginine 217 is a binding site for L-aspartate. ATP is bound by residues 217-219 and glutamine 226; that span reads RDE. Residue histidine 448 coordinates L-aspartate. Glutamate 482 lines the ATP pocket. Position 489 (arginine 489) interacts with L-aspartate. 534–537 contacts ATP; that stretch reads GLDR.

It belongs to the class-II aminoacyl-tRNA synthetase family. Type 1 subfamily. In terms of assembly, homodimer.

Its subcellular location is the cytoplasm. It carries out the reaction tRNA(Asp) + L-aspartate + ATP = L-aspartyl-tRNA(Asp) + AMP + diphosphate. Its function is as follows. Catalyzes the attachment of L-aspartate to tRNA(Asp) in a two-step reaction: L-aspartate is first activated by ATP to form Asp-AMP and then transferred to the acceptor end of tRNA(Asp). This is Aspartate--tRNA ligase from Vibrio vulnificus (strain YJ016).